A 537-amino-acid chain; its full sequence is CTP synthase (537 aa).

An amidoligase domain region spans residues 1–268 (MNTKYIFVTG…DNLVCKKLKL (268 aa)). Residue Ser-14 coordinates CTP. Ser-14 is a UTP binding site. Position 15-20 (15-20 (SLGKGI)) interacts with ATP. Tyr-55 contacts L-glutamine. Asp-72 contributes to the ATP binding site. Positions 72 and 142 each coordinate Mg(2+). CTP contacts are provided by residues 149–151 (DIE), 189–194 (KTKPTQ), and Lys-225. UTP contacts are provided by residues 189–194 (KTKPTQ) and Lys-225. In terms of domain architecture, Glutamine amidotransferase type-1 spans 293-535 (NIALVGKYVE…IKASLNSKHK (243 aa)). Gly-355 provides a ligand contact to L-glutamine. The active-site Nucleophile; for glutamine hydrolysis is the Cys-382. L-glutamine is bound by residues 383–386 (LGMQ), Glu-406, and Arg-463. Catalysis depends on residues His-508 and Glu-510.

Belongs to the CTP synthase family. In terms of assembly, homotetramer.

It catalyses the reaction UTP + L-glutamine + ATP + H2O = CTP + L-glutamate + ADP + phosphate + 2 H(+). The enzyme catalyses L-glutamine + H2O = L-glutamate + NH4(+). The catalysed reaction is UTP + NH4(+) + ATP = CTP + ADP + phosphate + 2 H(+). It participates in pyrimidine metabolism; CTP biosynthesis via de novo pathway; CTP from UDP: step 2/2. Its activity is regulated as follows. Allosterically activated by GTP, when glutamine is the substrate; GTP has no effect on the reaction when ammonia is the substrate. The allosteric effector GTP functions by stabilizing the protein conformation that binds the tetrahedral intermediate(s) formed during glutamine hydrolysis. Inhibited by the product CTP, via allosteric rather than competitive inhibition. Its function is as follows. Catalyzes the ATP-dependent amination of UTP to CTP with either L-glutamine or ammonia as the source of nitrogen. Regulates intracellular CTP levels through interactions with the four ribonucleotide triphosphates. The polypeptide is CTP synthase (Clostridium kluyveri (strain ATCC 8527 / DSM 555 / NBRC 12016 / NCIMB 10680 / K1)).